The chain runs to 586 residues: Asparagine synthetase, nodule [glutamine-hydrolyzing] (586 aa).

Cys2 functions as the For GATase activity in the catalytic mechanism. Residues 2–185 enclose the Glutamine amidotransferase type-2 domain; that stretch reads CGILAVLGCS…PGHLYSSKER (184 aa). L-glutamine contacts are provided by residues 50-54, 75-77, and Asp98; these read RLAIV and NGE. The 325-residue stretch at 193–517 folds into the Asparagine synthetase domain; that stretch reads PPWFNEAIIP…PQNSARLTVP (325 aa). Residues Leu232, Val268, and 342 to 343 each bind ATP; that span reads SG.

As to expression, root nodules.

The catalysed reaction is L-aspartate + L-glutamine + ATP + H2O = L-asparagine + L-glutamate + AMP + diphosphate + H(+). It functions in the pathway amino-acid biosynthesis; L-asparagine biosynthesis; L-asparagine from L-aspartate (L-Gln route): step 1/1. The sequence is that of Asparagine synthetase, nodule [glutamine-hydrolyzing] (AS1) from Pisum sativum (Garden pea).